The chain runs to 449 residues: Elongation factor 1-alpha (449 aa).

The tr-type G domain occupies 5 to 230; it reads KVHINIVVIG…DQIQEPKRPS (226 aa). Residues 14-21 are G1; the sequence is GHVDSGKS. Position 14–21 (14–21) interacts with GTP; it reads GHVDSGKS. N6,N6-dimethyllysine is present on K55. The tract at residues 70-74 is G2; it reads GITID. K79 is modified (N6,N6,N6-trimethyllysine). A G3 region spans residues 91-94; that stretch reads DAPG. GTP is bound by residues 91–95 and 153–156; these read DAPGH and NKMD. The G4 stretch occupies residues 153–156; it reads NKMD. N6,N6,N6-trimethyllysine is present on K187. The tract at residues 194 to 196 is G5; the sequence is SGF. Position 261 is an N6-methyllysine (K261). Position 289 is a 5-glutamyl glycerylphosphorylethanolamine (E289). K306 is subject to N6,N6,N6-trimethyllysine. E362 is modified (5-glutamyl glycerylphosphorylethanolamine). Residue K396 is modified to N6,N6,N6-trimethyllysine.

The protein belongs to the TRAFAC class translation factor GTPase superfamily. Classic translation factor GTPase family. EF-Tu/EF-1A subfamily.

The protein resides in the cytoplasm. In terms of biological role, this protein promotes the GTP-dependent binding of aminoacyl-tRNA to the A-site of ribosomes during protein biosynthesis. In Manihot esculenta (Cassava), this protein is Elongation factor 1-alpha (EF1).